A 527-amino-acid chain; its full sequence is Bifunctional purine biosynthesis protein PurH (527 aa).

An MGS-like domain is found at 8-156 (AGAKRPIRRA…KNHPSVAVVV (149 aa)).

This sequence belongs to the PurH family.

The catalysed reaction is (6R)-10-formyltetrahydrofolate + 5-amino-1-(5-phospho-beta-D-ribosyl)imidazole-4-carboxamide = 5-formamido-1-(5-phospho-D-ribosyl)imidazole-4-carboxamide + (6S)-5,6,7,8-tetrahydrofolate. The enzyme catalyses IMP + H2O = 5-formamido-1-(5-phospho-D-ribosyl)imidazole-4-carboxamide. Its pathway is purine metabolism; IMP biosynthesis via de novo pathway; 5-formamido-1-(5-phospho-D-ribosyl)imidazole-4-carboxamide from 5-amino-1-(5-phospho-D-ribosyl)imidazole-4-carboxamide (10-formyl THF route): step 1/1. The protein operates within purine metabolism; IMP biosynthesis via de novo pathway; IMP from 5-formamido-1-(5-phospho-D-ribosyl)imidazole-4-carboxamide: step 1/1. The protein is Bifunctional purine biosynthesis protein PurH of Mycobacterium sp. (strain JLS).